Here is a 312-residue protein sequence, read N- to C-terminus: DNA primase small subunit PriS (312 aa).

Catalysis depends on residues aspartate 88, aspartate 90, and aspartate 215.

This sequence belongs to the eukaryotic-type primase small subunit family. In terms of assembly, heterodimer of a small subunit (PriS) and a large subunit (PriL). It depends on Mg(2+) as a cofactor. Requires Mn(2+) as cofactor.

Catalytic subunit of DNA primase, an RNA polymerase that catalyzes the synthesis of short RNA molecules used as primers for DNA polymerase during DNA replication. The small subunit contains the primase catalytic core and has DNA synthesis activity on its own. Binding to the large subunit stabilizes and modulates the activity, increasing the rate of DNA synthesis while decreasing the length of the DNA fragments, and conferring RNA synthesis capability. The DNA polymerase activity may enable DNA primase to also catalyze primer extension after primer synthesis. May also play a role in DNA repair. This chain is DNA primase small subunit PriS, found in Pyrobaculum islandicum (strain DSM 4184 / JCM 9189 / GEO3).